Consider the following 140-residue polypeptide: Large ribosomal subunit protein uL16 (140 aa).

The protein belongs to the universal ribosomal protein uL16 family. As to quaternary structure, part of the 50S ribosomal subunit.

Functionally, binds 23S rRNA and is also seen to make contacts with the A and possibly P site tRNAs. The polypeptide is Large ribosomal subunit protein uL16 (Citrifermentans bemidjiense (strain ATCC BAA-1014 / DSM 16622 / JCM 12645 / Bem) (Geobacter bemidjiensis)).